The following is a 590-amino-acid chain: Phenylalanine--tRNA ligase beta subunit (590 aa).

Residues 276–382 (MELDVWDVPV…IMYNYDRFEP (107 aa)) form the B5 domain. Positions 360, 366, 369, and 370 each coordinate Mg(2+).

It belongs to the phenylalanyl-tRNA synthetase beta subunit family. Type 2 subfamily. In terms of assembly, tetramer of two alpha and two beta subunits. The cofactor is Mg(2+).

It is found in the cytoplasm. The enzyme catalyses tRNA(Phe) + L-phenylalanine + ATP = L-phenylalanyl-tRNA(Phe) + AMP + diphosphate + H(+). This Methanopyrus kandleri (strain AV19 / DSM 6324 / JCM 9639 / NBRC 100938) protein is Phenylalanine--tRNA ligase beta subunit.